The chain runs to 258 residues: MSKVKLTRENIISLLTQAGEIEFEEDQIKATFNFEDFCGENLDSIKKMSITSCLTFLKNRQSIMKVVNLCDFTFGKITIKKNSGRVGANDMTFRRLDSMIRVKLIEETGKAENLAIIKSKIASHPLVQAYGLPLTDAKSVRLAIMLGGSIPLIASVDSFEMISIILAIYQDAKYKDLGIEPSKYNTKEALGKVCTVLKSKGFTMDEEQVQKGKEYATILSSCNPNAKGSIAMEHYSEHLDKFYAMFGVRKEAKISGVA.

This sequence belongs to the tospovirus nucleocapsid protein family. In terms of assembly, homotrimer. Binds the viral genomic RNA.

The protein resides in the virion. In terms of biological role, encapsidates the genome protecting it from nucleases. The encapsidated genomic RNA is termed the nucleocapsid (NC) and serves as template for transcription and replication. The NC have a helical organization. This chain is Nucleoprotein (N), found in Frankliniella occidentalis (Western flower thrips).